The following is a 299-amino-acid chain: Bifunctional protein FolD (299 aa).

Residues 168 to 170, S193, and I234 each bind NADP(+); that span reads GRS.

Belongs to the tetrahydrofolate dehydrogenase/cyclohydrolase family. In terms of assembly, homodimer.

The catalysed reaction is (6R)-5,10-methylene-5,6,7,8-tetrahydrofolate + NADP(+) = (6R)-5,10-methenyltetrahydrofolate + NADPH. The enzyme catalyses (6R)-5,10-methenyltetrahydrofolate + H2O = (6R)-10-formyltetrahydrofolate + H(+). It functions in the pathway one-carbon metabolism; tetrahydrofolate interconversion. In terms of biological role, catalyzes the oxidation of 5,10-methylenetetrahydrofolate to 5,10-methenyltetrahydrofolate and then the hydrolysis of 5,10-methenyltetrahydrofolate to 10-formyltetrahydrofolate. The protein is Bifunctional protein FolD of Bartonella henselae (strain ATCC 49882 / DSM 28221 / CCUG 30454 / Houston 1) (Rochalimaea henselae).